A 362-amino-acid polypeptide reads, in one-letter code: UV excision repair protein RAD23 homolog A (362 aa).

Residues 1–81 (MAVTITLKTL…VVVMVTKAKT (81 aa)) form the Ubiquitin-like domain. Disordered stretches follow at residues 80–160 (KTSP…LVTG) and 201–227 (GIPGSPEPEHGSVQESQVSEQPSTEAG). Residues 88–109 (PSEASPTATPESSTSFPSAPAS) show a composition bias toward low complexity. Lys-122 participates in a covalent cross-link: Glycyl lysine isopeptide (Lys-Gly) (interchain with G-Cter in ubiquitin). Ser-123, Ser-128, Ser-133, Ser-136, and Ser-138 each carry phosphoserine. Over residues 126–144 (EESAPTTSPESVSGSVPSS) the composition is skewed to low complexity. Residues 161–201 (SEYETMLTEIMSMGYERERVVAALRASYNNPHRAVEYLLTG) enclose the UBA 1 domain. 3 positions are modified to phosphoserine: Ser-205, Ser-294, and Ser-356. The region spanning 317–357 (PQEKEAIERLKALGFPESLVIQAYFACEKNENLAANFLLSQ) is the UBA 2 domain.

This sequence belongs to the RAD23 family. As to quaternary structure, interacts with XPC; the interaction is suggesting the existence of a functional equivalent variant XPC complex. Interacts with PSMD4 and PSMC5. Interacts with ATXN3. Interacts with UBQLN2.

The protein localises to the nucleus. Its function is as follows. Multiubiquitin chain receptor involved in modulation of proteasomal degradation. Binds to 'Lys-48'-linked polyubiquitin chains in a length-dependent manner and with a lower affinity to 'Lys-63'-linked polyubiquitin chains. Proposed to be capable to bind simultaneously to the 26S proteasome and to polyubiquitinated substrates and to deliver ubiquitinated proteins to the proteasome. Involved in nucleotide excision repair and is thought to be functional equivalent for RAD23B in global genome nucleotide excision repair (GG-NER) by association with XPC. In vitro, XPC:RAD23A dimer has NER activity. Can stabilize XPC. The chain is UV excision repair protein RAD23 homolog A (RAD23A) from Bos taurus (Bovine).